The following is a 232-amino-acid chain: Large ribosomal subunit protein uL1 (232 aa).

This sequence belongs to the universal ribosomal protein uL1 family. In terms of assembly, part of the 50S ribosomal subunit.

Functionally, binds directly to 23S rRNA. The L1 stalk is quite mobile in the ribosome, and is involved in E site tRNA release. In terms of biological role, protein L1 is also a translational repressor protein, it controls the translation of the L11 operon by binding to its mRNA. This Burkholderia mallei (strain NCTC 10247) protein is Large ribosomal subunit protein uL1.